The chain runs to 586 residues: Eukaryotic translation initiation factor 3 subunit D (586 aa).

2 disordered regions span residues 16-37 (EDSW…YAPF) and 104-176 (KRTF…REPS). The segment covering 108–131 (GRGGGTVFRGRAQRGGAGQRGGRA) has biased composition (gly residues). The segment covering 162 to 174 (GWKDYDKPQRTRE) has biased composition (basic and acidic residues). An RNA gate region spans residues 301-315 (SIDLVTVNENAADAP). The disordered stretch occupies residues 563–586 (ANTFEEDDEAADEQEEKATEESEE). Positions 566 to 577 (FEEDDEAADEQE) are enriched in acidic residues.

Belongs to the eIF-3 subunit D family. Component of the eukaryotic translation initiation factor 3 (eIF-3) complex.

It is found in the cytoplasm. In terms of biological role, mRNA cap-binding component of the eukaryotic translation initiation factor 3 (eIF-3) complex, which is involved in protein synthesis of a specialized repertoire of mRNAs and, together with other initiation factors, stimulates binding of mRNA and methionyl-tRNAi to the 40S ribosome. The eIF-3 complex specifically targets and initiates translation of a subset of mRNAs involved in cell proliferation. In the eIF-3 complex, eif3d specifically recognizes and binds the 7-methylguanosine cap of a subset of mRNAs. The polypeptide is Eukaryotic translation initiation factor 3 subunit D (Aspergillus clavatus (strain ATCC 1007 / CBS 513.65 / DSM 816 / NCTC 3887 / NRRL 1 / QM 1276 / 107)).